Reading from the N-terminus, the 179-residue chain is Adenine phosphoribosyltransferase (179 aa).

It belongs to the purine/pyrimidine phosphoribosyltransferase family. Homodimer.

Its subcellular location is the cytoplasm. The enzyme catalyses AMP + diphosphate = 5-phospho-alpha-D-ribose 1-diphosphate + adenine. The protein operates within purine metabolism; AMP biosynthesis via salvage pathway; AMP from adenine: step 1/1. Its function is as follows. Catalyzes a salvage reaction resulting in the formation of AMP, that is energically less costly than de novo synthesis. The polypeptide is Adenine phosphoribosyltransferase (Mycolicibacterium gilvum (strain PYR-GCK) (Mycobacterium gilvum (strain PYR-GCK))).